A 570-amino-acid chain; its full sequence is Zinc finger protein 76 (570 aa).

Lys24 is covalently cross-linked (Glycyl lysine isopeptide (Lys-Gly) (interchain with G-Cter in SUMO2)). A run of 3 repeats spans residues 34-45, 62-73, and 88-99. The tract at residues 34–99 is 3 X 12 AA approximate repeats; it reads IQLEDGTTAY…LEDGSTAYIH (66 aa). C2H2-type zinc fingers lie at residues 165–189, 195–219, 225–249, 255–279, 285–309, 315–339, and 345–368; these read FRCG…ERAH, YRCD…VRTH, YKCP…VRTH, FQCP…VRTH, YTCP…VRIH, YVCT…HVVH, and YTCS…RSAH. A disordered region spans residues 365-401; sequence RSAHGELEATEESEQALYEQQQLEAASAAEESPPPKR. Positions 379 to 395 are enriched in low complexity; sequence QALYEQQQLEAASAAEE.

The protein belongs to the krueppel C2H2-type zinc-finger protein family. As to expression, testis.

The protein localises to the nucleus. Its function is as follows. May be involved in transcriptional regulation. This Homo sapiens (Human) protein is Zinc finger protein 76 (ZNF76).